Here is a 159-residue protein sequence, read N- to C-terminus: Eukaryotic translation initiation factor 5A-4 (159 aa).

Basic and acidic residues predominate over residues 1–12 (MSDEEHQFESKA). Residues 1 to 21 (MSDEEHQFESKADAGASKTYP) are disordered. Lys-52 carries the post-translational modification Hypusine.

Belongs to the eIF-5A family. Lys-52 undergoes hypusination, a unique post-translational modification that consists in the addition of a butylamino group from spermidine to lysine side chain, leading to the formation of the unusual amino acid hypusine. eIF-5As are the only known proteins to undergo this modification, which is essential for their function.

Functionally, translation factor that promotes translation elongation and termination, particularly upon ribosome stalling at specific amino acid sequence contexts. Binds between the exit (E) and peptidyl (P) site of the ribosome and promotes rescue of stalled ribosome: specifically required for efficient translation of polyproline-containing peptides as well as other motifs that stall the ribosome. Acts as a ribosome quality control (RQC) cofactor by joining the RQC complex to facilitate peptidyl transfer during CAT tailing step. In Solanum tuberosum (Potato), this protein is Eukaryotic translation initiation factor 5A-4 (EIF5A4).